Here is a 729-residue protein sequence, read N- to C-terminus: 1,4-alpha-glucan branching enzyme GlgB (729 aa).

The Nucleophile role is filled by D407. E460 functions as the Proton donor in the catalytic mechanism.

The protein belongs to the glycosyl hydrolase 13 family. GlgB subfamily. As to quaternary structure, monomer.

The catalysed reaction is Transfers a segment of a (1-&gt;4)-alpha-D-glucan chain to a primary hydroxy group in a similar glucan chain.. Its pathway is glycan biosynthesis; glycogen biosynthesis. In terms of biological role, catalyzes the formation of the alpha-1,6-glucosidic linkages in glycogen by scission of a 1,4-alpha-linked oligosaccharide from growing alpha-1,4-glucan chains and the subsequent attachment of the oligosaccharide to the alpha-1,6 position. The chain is 1,4-alpha-glucan branching enzyme GlgB from Pseudoalteromonas atlantica (strain T6c / ATCC BAA-1087).